The chain runs to 102 residues: Urease subunit beta (102 aa).

Belongs to the urease beta subunit family. Heterotrimer of UreA (gamma), UreB (beta) and UreC (alpha) subunits. Three heterotrimers associate to form the active enzyme.

It localises to the cytoplasm. The enzyme catalyses urea + 2 H2O + H(+) = hydrogencarbonate + 2 NH4(+). It participates in nitrogen metabolism; urea degradation; CO(2) and NH(3) from urea (urease route): step 1/1. The protein is Urease subunit beta of Pseudomonas savastanoi pv. phaseolicola (strain 1448A / Race 6) (Pseudomonas syringae pv. phaseolicola (strain 1448A / Race 6)).